The following is a 144-amino-acid chain: MWLAILLALCCLTSDTHGARPPDFCSKDLISSVKPGFPKTIETNNPGVLKAARHSVEKFNNCTNDIFLFKESHVSKALVQVVKGLKYMLEVKIGRTTCRKTMHHQLDNCDFQTNPALKRTLYCYSEVWVIPWLHSFEVPVLLCQ.

The N-terminal stretch at 1–18 is a signal peptide; it reads MWLAILLALCCLTSDTHG. Residue asparagine 61 is glycosylated (N-linked (GlcNAc...) asparagine). A Secondary area of contact motif is present at residues 80–84; the sequence is QVVKG. 2 disulfide bridges follow: cysteine 98–cysteine 109 and cysteine 123–cysteine 143.

Belongs to the cystatin family.

Its subcellular location is the secreted. Inhibits papain and cathepsin L but with affinities lower than other cystatins. May play a role in immune regulation through inhibition of a unique target in the hematopoietic system. In Mus musculus (Mouse), this protein is Cystatin-F (Cst7).